Reading from the N-terminus, the 217-residue chain is Uracil-DNA glycosylase (217 aa).

Asp-62 serves as the catalytic Proton acceptor.

This sequence belongs to the uracil-DNA glycosylase (UDG) superfamily. UNG family.

Its subcellular location is the cytoplasm. The enzyme catalyses Hydrolyzes single-stranded DNA or mismatched double-stranded DNA and polynucleotides, releasing free uracil.. Excises uracil residues from the DNA which can arise as a result of misincorporation of dUMP residues by DNA polymerase or due to deamination of cytosine. The chain is Uracil-DNA glycosylase from Streptococcus pyogenes serotype M3 (strain ATCC BAA-595 / MGAS315).